Reading from the N-terminus, the 131-residue chain is Large-conductance mechanosensitive channel (131 aa).

Helical transmembrane passes span 8–28, 30–50, and 67–87; these read FAIR…GAFG, IVSS…LGGI, and GAFI…FLFV.

Belongs to the MscL family. In terms of assembly, homopentamer.

The protein localises to the cell membrane. Functionally, channel that opens in response to stretch forces in the membrane lipid bilayer. May participate in the regulation of osmotic pressure changes within the cell. The chain is Large-conductance mechanosensitive channel from Geobacillus kaustophilus (strain HTA426).